The chain runs to 928 residues: Periplasmic nitrate reductase (928 aa).

The tat-type signal signal peptide spans 1–33 (MAFSRREFLKSAAAASAASAVGMSVPSQLLAQA). A 4Fe-4S Mo/W bis-MGD-type domain is found at 40-96 (WRWDKSVCRFCGTGCGIMVATKNDQIVAVKGDPAAPVNRGLNCIKGYFNAKIMYGAD). [4Fe-4S] cluster-binding residues include Cys47, Cys50, Cys54, and Cys82. Mo-bis(molybdopterin guanine dinucleotide) is bound by residues Lys84, Gln152, Asn177, Cys181, 214-221 (WGANMAEM), 265-267 (QTD), Met422, Gln426, Asn532, 557-558 (SD), Lys580, Asp607, and 818-827 (TGRVLEHWHS). Substrate is bound at residue Trp894. Mo-bis(molybdopterin guanine dinucleotide) is bound by residues Asn902 and Lys919.

Belongs to the prokaryotic molybdopterin-containing oxidoreductase family. NasA/NapA/NarB subfamily. As to quaternary structure, component of the periplasmic nitrate reductase NapAB complex composed of NapA and NapB. [4Fe-4S] cluster is required as a cofactor. The cofactor is Mo-bis(molybdopterin guanine dinucleotide). Post-translationally, predicted to be exported by the Tat system. The position of the signal peptide cleavage has not been experimentally proven.

The protein resides in the periplasm. It catalyses the reaction 2 Fe(II)-[cytochrome] + nitrate + 2 H(+) = 2 Fe(III)-[cytochrome] + nitrite + H2O. Catalytic subunit of the periplasmic nitrate reductase complex NapAB. Receives electrons from NapB and catalyzes the reduction of nitrate to nitrite. The protein is Periplasmic nitrate reductase of Wolinella succinogenes (strain ATCC 29543 / DSM 1740 / CCUG 13145 / JCM 31913 / LMG 7466 / NCTC 11488 / FDC 602W) (Vibrio succinogenes).